Reading from the N-terminus, the 149-residue chain is Large ribosomal subunit protein bL9 (149 aa).

This sequence belongs to the bacterial ribosomal protein bL9 family.

Its function is as follows. Binds to the 23S rRNA. The chain is Large ribosomal subunit protein bL9 from Legionella pneumophila (strain Lens).